A 542-amino-acid polypeptide reads, in one-letter code: Chaperonin GroEL (542 aa).

ATP-binding positions include 29–32, 86–90, Gly-413, and Asp-494; these read TLGP and DGTTT.

This sequence belongs to the chaperonin (HSP60) family. Forms a cylinder of 14 subunits composed of two heptameric rings stacked back-to-back. Interacts with the co-chaperonin GroES.

Its subcellular location is the cytoplasm. It carries out the reaction ATP + H2O + a folded polypeptide = ADP + phosphate + an unfolded polypeptide.. Functionally, together with its co-chaperonin GroES, plays an essential role in assisting protein folding. The GroEL-GroES system forms a nano-cage that allows encapsulation of the non-native substrate proteins and provides a physical environment optimized to promote and accelerate protein folding. This is Chaperonin GroEL from Endomicrobium trichonymphae.